The chain runs to 88 residues: uncharacterized protein (88 aa).

Residues 1–88 (MPHLPELSKQ…IRRGNPSGVA (88 aa)) are disordered. The segment covering 21-65 (YRAKGEDLENSHHNNESRLAEGVHYDRNKAPALQEREKASTEKVN) has biased composition (basic and acidic residues).

Its function is as follows. Involved in osmoadaptation. This is an uncharacterized protein from Emericella nidulans (strain FGSC A4 / ATCC 38163 / CBS 112.46 / NRRL 194 / M139) (Aspergillus nidulans).